The following is a 122-amino-acid chain: Large ribosomal subunit protein uL14 (122 aa).

It belongs to the universal ribosomal protein uL14 family. As to quaternary structure, part of the 50S ribosomal subunit. Forms a cluster with proteins L3 and L19. In the 70S ribosome, L14 and L19 interact and together make contacts with the 16S rRNA in bridges B5 and B8.

Functionally, binds to 23S rRNA. Forms part of two intersubunit bridges in the 70S ribosome. The polypeptide is Large ribosomal subunit protein uL14 (Anaeromyxobacter dehalogenans (strain 2CP-1 / ATCC BAA-258)).